Consider the following 226-residue polypeptide: UPF0758 protein Spy49_0870 (226 aa).

Residues 103 to 225 (SVLTSVQVAE…YYSFREKSTL (123 aa)) enclose the MPN domain. The Zn(2+) site is built by histidine 174, histidine 176, and aspartate 187. A JAMM motif motif is present at residues 174-187 (HNHPSGNIEPSSND).

Belongs to the UPF0758 family.

This chain is UPF0758 protein Spy49_0870, found in Streptococcus pyogenes serotype M49 (strain NZ131).